The chain runs to 47 residues: Conotoxin Cal6.18 (47 aa).

Residues 1-19 (MKLTYVLIVAMLVLVVCRA) form the signal peptide.

This sequence belongs to the conotoxin O1 superfamily. May contain 3 disulfide bonds. In terms of tissue distribution, expressed by the venom duct.

It is found in the secreted. Functionally, probable neurotoxin. This Californiconus californicus (California cone) protein is Conotoxin Cal6.18.